The chain runs to 174 residues: Repair DNA polymerase X (174 aa).

Residues 42-51 (REEKMLNDVD) are involved in ssDNA binding. D49 and D51 together coordinate Mg(2+). C81 and C86 form a disulfide bridge. Position 100 (D100) interacts with Mg(2+).

It belongs to the DNA polymerase type-X family. The cofactor is Mg(2+).

The protein resides in the virion. The enzyme catalyses DNA(n) + a 2'-deoxyribonucleoside 5'-triphosphate = DNA(n+1) + diphosphate. Error-prone polymerase lacking a proofreading 3'-5' exonuclease which catalyzes the gap-filling reaction during the DNA repair process. Specifically binds intermediates in the single-nucleotide base-excision repair process. Also catalyzes DNA polymerization with low nucleotide-insertion fidelity. Probably acts as a strategic DNA mutase, which gives rise to a rapid emergence of variants. Generates mismatched G-G pairs, in that case, the polymerase first binds the deoxynucleotide followed by mismatch formation. Together with the viral DNA ligase, fills the single nucleotide gaps generated by the AP endonuclease. Binds DNA with high affinity via the helix alphaE. This African swine fever virus (isolate Tick/South Africa/Pretoriuskop Pr4/1996) (ASFV) protein is Repair DNA polymerase X.